We begin with the raw amino-acid sequence, 120 residues long: PE family protein PE10 (120 aa).

The tract at residues 29–59 (GQVTGNGGSGNSGTSAAAANPNSDNTASIAD) is disordered. Positions 40 to 51 (SGTSAAAANPNS) are enriched in low complexity.

It belongs to the mycobacterial PE family. As to quaternary structure, forms a complex with PE9. The complex interacts with human TLR4.

The protein localises to the secreted. It localises to the cell wall. Functionally, together with PE9, induces macrophage apoptosis through human Toll-like receptor 4 (TLR4) signaling pathway. Interaction with TLR4 leads to increased levels of phospho-IRF-3, increase in the transcript levels of IFN-beta and pro-apoptotic genes, up-regulation of IL-10, down-regulation of IL-1b and enhanced levels of macrophage apoptosis. This is PE family protein PE10 from Mycobacterium tuberculosis (strain ATCC 25618 / H37Rv).